The primary structure comprises 851 residues: Protein NUD1 (851 aa).

Disordered regions lie at residues 1–31 (MDMD…NAHS) and 216–352 (LVGS…KAPS). The segment covering 8-21 (AELSSQLENLTINS) has biased composition (polar residues). Low complexity-rich tracts occupy residues 223-246 (NSNN…INNK) and 260-278 (SNSF…QTQS). The segment covering 291–304 (NTISPGQLGYQFNH) has biased composition (polar residues). The span at 320 to 333 (SSSHSLDNTSSNQS) shows a compositional bias: low complexity. A Glycyl lysine isopeptide (Lys-Gly) (interchain with G-Cter in ubiquitin) cross-link involves residue K357. Phosphothreonine occurs at positions 388 and 392. S417 and S419 each carry phosphoserine. LRR repeat units lie at residues 544–566 (DLEC…SLCH), 567–588 (HLQE…GSSR), 589–609 (MKKL…EQLI), 621–642 (TVEV…NCLP), and 643–664 (RLKV…SKME).

In terms of assembly, interacts directly with MPC54, CNM67, SPO21/MPC70, ADY3 and ADY4. Probable component of a spindle pole boby (SPB) complex composed of ADY3, SSP1, DON1, MPC54, SPO21/MPC70, NUD1 and CNM67. Post-translationally, phosphorylated from S/G2 phase until the end of mitosis.

Its subcellular location is the cytoplasm. The protein localises to the cytoskeleton. It is found in the microtubule organizing center. It localises to the spindle pole body. The protein resides in the nucleus envelope. Functionally, involved in astral microtubule organization by binding SCP72 to the outer plaque in a cell-cycle dependent manner. Required for the mitotic exit by facilitating the binding of TEMP1 to CDC15. Also involved in the pathway that organizes the shaping and sizing of the prospore membrane (PSM) during sporulation. The chain is Protein NUD1 (NUD1) from Saccharomyces cerevisiae (strain ATCC 204508 / S288c) (Baker's yeast).